Reading from the N-terminus, the 308-residue chain is Glutaminase (308 aa).

Substrate is bound by residues Ser-66, Asn-117, Glu-161, Asn-168, Tyr-192, Tyr-244, and Val-262.

It belongs to the glutaminase family. Homotetramer.

The catalysed reaction is L-glutamine + H2O = L-glutamate + NH4(+). This Proteus mirabilis (strain HI4320) protein is Glutaminase.